A 2145-amino-acid chain; its full sequence is Adenylate cyclase (2145 aa).

Disordered stretches follow at residues 1–115 (MPRN…RMSD), 127–236 (DPAG…SGAR), 266–307 (GKEH…PVPK), and 329–547 (VRDI…GPTD). 3 stretches are compositionally biased toward low complexity: residues 7-23 (SSRF…SARS), 35-68 (PSAS…APSR), and 89-107 (SPTS…SSNS). Composition is skewed to polar residues over residues 134-148 (SRTQ…SLSQ) and 159-205 (PASS…TESP). Positions 217–234 (SIASITTTASSQGSRASG) are enriched in low complexity. The span at 269 to 281 (HRSHSYSHARPHR) shows a compositional bias: basic residues. The span at 343–357 (NDSSQQNNPPKTSGS) shows a compositional bias: polar residues. Positions 377-403 (KSNEDPRSLRPTVSREDSTISVPKDRN) are enriched in basic and acidic residues. Residues 404-441 (GSSTMYGTRSRAQSPAPSTTGSYWGHKSGSTDGQTSPG) are compositionally biased toward polar residues. 2 stretches are compositionally biased toward basic and acidic residues: residues 454 to 466 (RLKE…DLKK) and 495 to 511 (ADGK…RPDL). The Ras-associating domain occupies 637–727 (HNYCIRVFRA…IEDIGREDNS (91 aa)). 15 LRR repeats span residues 779–800 (EIIS…FISV), 803–824 (NLRD…FGYA), 826–847 (RLTM…ALHN), 850–871 (GLLK…FEAF), 873–894 (VLRT…LAKL), 896–917 (NLVD…VGQM), 919–941 (SLER…FKNL), 943–964 (SLRE…SQLP), 965–986 (KLEI…FERV), 987–1006 (RSIK…APVP), 1007–1028 (TLKA…FHNM), 1030–1051 (NLER…IGNL), 1053–1074 (RLEY…IGCL), 1076–1097 (ELKR…LWWA), and 1099–1120 (KLDY…ASRA). The tract at residues 1114–1226 (PKPASRAPHP…SSRKDSSHTQ (113 aa)) is disordered. Composition is skewed to low complexity over residues 1160–1179 (RPSQ…VPGG) and 1201–1217 (SRST…PTAS). LRR repeat units lie at residues 1235–1255 (SLRY…DQLC), 1259–1280 (NLRV…SIKS), 1283–1304 (QLVE…DLEE), 1307–1328 (MLQT…ISRA), 1330–1352 (KLTV…PYDW), and 1359–1380 (NLRY…SVPT). Positions 1432 to 1709 (PYGMADTLGS…NKMTVQMLGV (278 aa)) constitute a PPM-type phosphatase domain. Residues 1718-1760 (RSRQHKGQSMPVYASLQDDGGSSTGMRRARKARDGPLDSTLGR) are disordered. The Guanylate cyclase domain maps to 1773 to 1910 (AIVFTDIKNS…PMVNKASRIS (138 aa)). Residues aspartate 1778 and aspartate 1821 each contribute to the Mg(2+) site.

It belongs to the adenylyl cyclase class-3 family. Mg(2+) is required as a cofactor.

The enzyme catalyses ATP = 3',5'-cyclic AMP + diphosphate. Functionally, plays essential roles in regulation of cellular metabolism by catalyzing the synthesis of a second messenger, cAMP. The sequence is that of Adenylate cyclase from Podospora anserina (Pleurage anserina).